The sequence spans 282 residues: Probable endonuclease 4 (282 aa).

Zn(2+) is bound by residues His-71, His-111, Glu-147, Asp-181, His-184, His-218, Asp-231, His-233, and Glu-263.

It belongs to the AP endonuclease 2 family. The cofactor is Zn(2+).

It carries out the reaction Endonucleolytic cleavage to 5'-phosphooligonucleotide end-products.. In terms of biological role, endonuclease IV plays a role in DNA repair. It cleaves phosphodiester bonds at apurinic or apyrimidinic (AP) sites, generating a 3'-hydroxyl group and a 5'-terminal sugar phosphate. The chain is Probable endonuclease 4 from Protochlamydia amoebophila (strain UWE25).